The following is a 160-amino-acid chain: 6,7-dimethyl-8-ribityllumazine synthase (160 aa).

5-amino-6-(D-ribitylamino)uracil is bound by residues F22, 57 to 59 (TYE), and 81 to 83 (TII). 86–87 (QT) lines the (2S)-2-hydroxy-3-oxobutyl phosphate pocket. Residue H89 is the Proton donor of the active site. L114 lines the 5-amino-6-(D-ribitylamino)uracil pocket. R128 contributes to the (2S)-2-hydroxy-3-oxobutyl phosphate binding site.

Belongs to the DMRL synthase family. As to quaternary structure, forms an icosahedral capsid composed of 60 subunits, arranged as a dodecamer of pentamers.

The enzyme catalyses (2S)-2-hydroxy-3-oxobutyl phosphate + 5-amino-6-(D-ribitylamino)uracil = 6,7-dimethyl-8-(1-D-ribityl)lumazine + phosphate + 2 H2O + H(+). It functions in the pathway cofactor biosynthesis; riboflavin biosynthesis; riboflavin from 2-hydroxy-3-oxobutyl phosphate and 5-amino-6-(D-ribitylamino)uracil: step 1/2. In terms of biological role, catalyzes the formation of 6,7-dimethyl-8-ribityllumazine by condensation of 5-amino-6-(D-ribitylamino)uracil with 3,4-dihydroxy-2-butanone 4-phosphate. This is the penultimate step in the biosynthesis of riboflavin. This is 6,7-dimethyl-8-ribityllumazine synthase from Buchnera aphidicola subsp. Acyrthosiphon pisum (strain APS) (Acyrthosiphon pisum symbiotic bacterium).